The sequence spans 457 residues: Cysteine--tRNA ligase (457 aa).

A Zn(2+)-binding site is contributed by cysteine 28. The 'HIGH' region signature appears at 30-40 (ITVYDLCHIGH). Zn(2+)-binding residues include cysteine 209, histidine 234, and glutamate 238. The short motif at 266–270 (KMSKS) is the 'KMSKS' region element. Lysine 269 contributes to the ATP binding site.

The protein belongs to the class-I aminoacyl-tRNA synthetase family. As to quaternary structure, monomer. The cofactor is Zn(2+).

It localises to the cytoplasm. The enzyme catalyses tRNA(Cys) + L-cysteine + ATP = L-cysteinyl-tRNA(Cys) + AMP + diphosphate. The sequence is that of Cysteine--tRNA ligase from Sodalis glossinidius (strain morsitans).